The chain runs to 284 residues: Diaminopimelate epimerase (284 aa).

Residues asparagine 14 and asparagine 67 each coordinate substrate. Cysteine 76 functions as the Proton donor in the catalytic mechanism. Residues 77–78 (GN), asparagine 166, asparagine 199, and 217–218 (ER) each bind substrate. Catalysis depends on cysteine 226, which acts as the Proton acceptor. 227 to 228 (GT) contacts substrate.

The protein belongs to the diaminopimelate epimerase family. In terms of assembly, homodimer.

It localises to the cytoplasm. It catalyses the reaction (2S,6S)-2,6-diaminopimelate = meso-2,6-diaminopimelate. Its pathway is amino-acid biosynthesis; L-lysine biosynthesis via DAP pathway; DL-2,6-diaminopimelate from LL-2,6-diaminopimelate: step 1/1. In terms of biological role, catalyzes the stereoinversion of LL-2,6-diaminopimelate (L,L-DAP) to meso-diaminopimelate (meso-DAP), a precursor of L-lysine and an essential component of the bacterial peptidoglycan. This is Diaminopimelate epimerase from Bacillus pumilus (strain SAFR-032).